We begin with the raw amino-acid sequence, 432 residues long: Cyclic GMP-AMP synthase (432 aa).

GTP is bound at residue 110-115 (QGSFQY). Mg(2+)-binding residues include D129 and D131. R180 contacts ATP. D191 serves as a coordination point for Mg(2+). Position 255 (S255) interacts with ATP. The GTP site is built by K283, S297, and D344. Positions 413–432 (LNAPSKEPSSKPINKTMVSG) are disordered. Positions 423-432 (KPINKTMVSG) are enriched in polar residues.

The protein belongs to the CD-NTase family. A01 subfamily. Mg(2+) is required as a cofactor.

The enzyme catalyses GTP + ATP = 3',3'-cGAMP + 2 diphosphate. Its function is as follows. Cyclic nucleotide synthase (second messenger synthase) of a CBASS antivirus system. CBASS (cyclic oligonucleotide-based antiphage signaling system) provides immunity against bacteriophage. The CD-NTase protein synthesizes cyclic nucleotides in response to infection; these serve as specific second messenger signals. The signals activate a diverse range of effectors, leading to bacterial cell death and thus abortive phage infection. A type II-C(GA) CBASS system. Catalyzes the synthesis of 3'3'-cyclic GMP-AMP (3'3'-cGAMP) from GTP and ATP, a second messenger in cell signal transduction. Is also able to produce c-di-AMP and c-di-GMP from ATP and GTP, respectively; however, 3'3'-cGAMP is the dominant molecule produced by DncV in vivo, contrary to the 2'3'-cGAMP produced by eukaryotes. By producing cGAMP, down-regulates csgD expression and expression of flagellum regulon genes, which leads to the down-regulation of rdar biofilm formation and flagellum-mediated swimming and swarming motility in a temperature-dependent manner. Controls the activity of cGAMP-activated phospholipase CapV, a patatin-like lipase that is a direct 3',3'-cGAMP receptor encoded in the dncV operon. This chain is Cyclic GMP-AMP synthase, found in Escherichia coli.